The chain runs to 373 residues: Glutamine synthetase (373 aa).

At A2 the chain carries N-acetylalanine. Residues 2-25 (ATSASSHLNKGIKQMYMSLPQGEK) form a required for glutamine-induced ubiquitination by CRL4(CRBN) and proteasomal degradation region. K11 and K14 each carry N6-acetyllysine. A GS beta-grasp domain is found at 24–106 (EKVQAMYIWV…VFCEVFKYNQ (83 aa)). The residue at position 104 (Y104) is a Phosphotyrosine. Residues 113–373 (LRHTCKRIMD…TGDQPFQYKN (261 aa)) enclose the GS catalytic domain. An ATP-binding site is contributed by E134. Mn(2+) contacts are provided by E134, E136, E196, and E203. 203 to 208 (EFQIGP) provides a ligand contact to ATP. 246 to 247 (NW) lines the L-glutamate pocket. H253 provides a ligand contact to Mn(2+). ATP is bound by residues 255–257 (NFS), R319, and R324. R319 contacts L-glutamate. Residue 336–338 (YFE) coordinates ADP. A Mn(2+)-binding site is contributed by E338. R340 contributes to the L-glutamate binding site. The residue at position 343 (S343) is a Phosphoserine.

The protein belongs to the glutamine synthetase family. Decamer; composed of two pentamers. Interacts with PALMD. Interacts with RHOJ. Interacts with BEST2; this interaction tethers a fraction of GLUL to the membrane, causing a decrease of cytosolic glutamine synthase (GS) activity and inhibits the chloride channel activity of BEST2 by affecting the gating at the aperture in the absence of intracellular glutamate. The cofactor is Mg(2+). Mn(2+) serves as cofactor. Post-translationally, palmitoylated; undergoes autopalmitoylation. In terms of processing, acetylated by EP300/p300; acetylation is stimulated by increased glutamine levels and promotes ubiquitin-mediated proteasomal degradation. Ubiquitinated by ZNRF1. Ubiquitinated by the DCX (DDB1-CUL4-X-box) E3 ubiquitin-protein ligase complex called CRL4(CRBN), leading to proteasomal degradation.

The protein localises to the cytoplasm. Its subcellular location is the cytosol. It is found in the microsome. The protein resides in the mitochondrion. It localises to the cell membrane. It catalyses the reaction L-glutamate + NH4(+) + ATP = L-glutamine + ADP + phosphate + H(+). The enzyme catalyses L-cysteinyl-[protein] + hexadecanoyl-CoA = S-hexadecanoyl-L-cysteinyl-[protein] + CoA. Glutamine synthetase activity is inhibited by methionine sulfoximine (MSO). Its function is as follows. Glutamine synthetase that catalyzes the ATP-dependent conversion of glutamate and ammonia to glutamine. Its role depends on tissue localization: in the brain, it regulates the levels of toxic ammonia and converts neurotoxic glutamate to harmless glutamine, whereas in the liver, it is one of the enzymes responsible for the removal of ammonia. Plays a key role in ammonium detoxification during erythropoiesis: the glutamine synthetase activity is required to remove ammonium generated by porphobilinogen deaminase (HMBS) during heme biosynthesis to prevent ammonium accumulation and oxidative stress. Essential for proliferation of fetal skin fibroblasts. Independently of its glutamine synthetase activity, required for endothelial cell migration during vascular development. Involved in angiogenesis by regulating membrane localization and activation of the GTPase RHOJ, possibly by promoting RHOJ palmitoylation. May act as a palmitoyltransferase for RHOJ: able to autopalmitoylate and then transfer the palmitoyl group to RHOJ. Plays a role in ribosomal 40S subunit biogenesis. Through the interaction with BEST2, inhibits BEST2 channel activity by affecting the gating at the aperture in the absence of intracellular L-glutamate, but sensitizes BEST2 to intracellular L-glutamate, which promotes the opening of BEST2 and thus relieves its inhibitory effect on BEST2. The protein is Glutamine synthetase of Cricetulus griseus (Chinese hamster).